We begin with the raw amino-acid sequence, 399 residues long: Elongation factor Tu (399 aa).

Residues 10 to 204 (KPHVNIGTIG…AVDANIPEPV (195 aa)) enclose the tr-type G domain. Positions 19 to 26 (GHVDHGKT) are G1. 19–26 (GHVDHGKT) is a binding site for GTP. Residue threonine 26 coordinates Mg(2+). The segment at 60–64 (GITIN) is G2. Positions 81-84 (DCPG) are G3. GTP contacts are provided by residues 81–85 (DCPGH) and 136–139 (NKCD). The tract at residues 136–139 (NKCD) is G4. The tract at residues 174–176 (SGL) is G5.

The protein belongs to the TRAFAC class translation factor GTPase superfamily. Classic translation factor GTPase family. EF-Tu/EF-1A subfamily. Monomer.

Its subcellular location is the cytoplasm. The enzyme catalyses GTP + H2O = GDP + phosphate + H(+). Functionally, GTP hydrolase that promotes the GTP-dependent binding of aminoacyl-tRNA to the A-site of ribosomes during protein biosynthesis. This chain is Elongation factor Tu, found in Synechococcus sp. (strain RCC307).